A 320-amino-acid chain; its full sequence is Protein PXR1 (320 aa).

Residues M1 to K11 are compositionally biased toward basic residues. The interval M1–S24 is disordered. Positions D15–S24 are enriched in polar residues. One can recognise a G-patch domain in the interval T25–R79. A disordered region spans residues G152–H298. The segment covering K169–A182 has biased composition (basic residues). 3 stretches are compositionally biased toward basic and acidic residues: residues R203–D214, K243–S256, and Q269–P288.

Belongs to the PINX1 family.

It is found in the nucleus. It localises to the nucleolus. In terms of biological role, involved in rRNA-processing at A0, A1 and A2 sites and negatively regulates telomerase. The polypeptide is Protein PXR1 (PXR1) (Ajellomyces capsulatus (strain NAm1 / WU24) (Darling's disease fungus)).